The following is a 657-amino-acid chain: Protein mono-ADP-ribosyltransferase TIPARP (657 aa).

Over residues 1-10 the composition is skewed to acidic residues; it reads MEMETTEPEP. A disordered region spans residues 1 to 21; it reads MEMETTEPEPDCVVQPPSPPD. At C39 the chain carries ADP-ribosylcysteine. A Nuclear localization signal motif is present at residues 41-47; the sequence is KKKDQKR. The C3H1-type zinc finger occupies 237-264; the sequence is ENGIEICMDFLQGTCIYGRDCLKHHTVL. Residues 332-410 enclose the WWE domain; the sequence is STPPSSNVNS…RRPLFRSCFI (79 aa). In terms of domain architecture, PARP catalytic spans 449 to 657; it reads YPETWVYMHP…YEEVSNTVSI (209 aa).

This sequence belongs to the ARTD/PARP family. Interacts with AHR. Post-translationally, auto-mono-ADP-ribosylated.

It is found in the nucleus. The catalysed reaction is L-aspartyl-[protein] + NAD(+) = 4-O-(ADP-D-ribosyl)-L-aspartyl-[protein] + nicotinamide. It carries out the reaction L-glutamyl-[protein] + NAD(+) = 5-O-(ADP-D-ribosyl)-L-glutamyl-[protein] + nicotinamide. It catalyses the reaction L-cysteinyl-[protein] + NAD(+) = S-(ADP-D-ribosyl)-L-cysteinyl-[protein] + nicotinamide + H(+). ADP-ribosyltransferase activity is inhibited by PJ34; inhibition is however not specific to TIPARP and other PARP-domain containing proteins are also inhibited by PJ34. Partially inhibited by KU0058948. In terms of biological role, ADP-ribosyltransferase that mediates mono-ADP-ribosylation of glutamate, aspartate and cysteine residues on target proteins. Acts as a negative regulator of AHR by mediating mono-ADP-ribosylation of AHR, leading to inhibit transcription activator activity of AHR. This Homo sapiens (Human) protein is Protein mono-ADP-ribosyltransferase TIPARP.